The following is a 354-amino-acid chain: G protein alpha o subunit (354 aa).

The N-myristoyl glycine moiety is linked to residue glycine 2. The S-palmitoyl cysteine moiety is linked to residue cysteine 3. Residues 32–354 (KDIKLLLLGA…ANNLRGCGLY (323 aa)) enclose the G-alpha domain. The segment at 35-48 (KLLLLGAGESGKST) is G1 motif. GTP contacts are provided by residues 40 to 47 (GAGESGKS), 176 to 182 (LRTRVKT), 201 to 205 (DVGGQ), 270 to 273 (NKKD), and alanine 326. Residues serine 47 and threonine 182 each contribute to the Mg(2+) site. The interval 174-182 (DILRTRVKT) is G2 motif. The interval 197-206 (FKLFDVGGQR) is G3 motif. Residues 266 to 273 (ILFLNKKD) are G4 motif. Positions 324–329 (TCATDT) are G5 motif.

Belongs to the G-alpha family. G(i/o/t/z) subfamily. G proteins are composed of 3 units; alpha, beta and gamma. The alpha chain contains the guanine nucleotide binding site. As to expression, expressed primarily in neuronal cell bodies in the brain, optic lobe, and thoracic and abdominal ganglia. Also expressed in antenna, oocytes and ovarian nurse cells.

Its function is as follows. Guanine nucleotide-binding proteins (G proteins) are involved as modulators or transducers in various transmembrane signaling systems. Plays a role in glial cell differentiation during embryogenesis; loco, Galphai and the G-protein coupled receptor, moody, are required in the surface glia to achieve effective insulation of the nerve cord. This Drosophila melanogaster (Fruit fly) protein is G protein alpha o subunit (Galphao).